The primary structure comprises 711 residues: Myb-like protein B (711 aa).

The segment covering Gln-24–Gln-50 has biased composition (low complexity). Disordered regions lie at residues Gln-24–Leu-70 and Asn-113–Asn-235. 2 stretches are compositionally biased toward polar residues: residues Asn-113 to Thr-139 and Thr-148 to Ser-157. 2 stretches are compositionally biased toward low complexity: residues Asn-158–Ile-187 and Asn-198–Asn-235. 2 consecutive HTH myb-type domains span residues Arg-428–Ile-490 and Lys-491–Thr-542. DNA-binding regions (H-T-H motif) lie at residues Trp-462–Leu-486 and Trp-514–Met-538. The Myb-like domain occupies Arg-540–Asn-598. The disordered stretch occupies residues Asn-598 to Ile-640.

The protein resides in the nucleus. In terms of biological role, transcriptional activator that initiates multicellular development by induction of adenylyl cyclase expression. This chain is Myb-like protein B (mybB), found in Dictyostelium discoideum (Social amoeba).